The following is a 371-amino-acid chain: Queuine tRNA-ribosyltransferase (371 aa).

Catalysis depends on aspartate 93, which acts as the Proton acceptor. Residues 93–97, aspartate 147, glutamine 191, and glycine 218 each bind substrate; that span reads DSGGF. Residues 249–255 form an RNA binding region; sequence GVGTPLD. Aspartate 268 (nucleophile) is an active-site residue. The segment at 273–277 is RNA binding; important for wobble base 34 recognition; that stretch reads TRNAR. Zn(2+) is bound by residues cysteine 306, cysteine 308, cysteine 311, and histidine 337.

It belongs to the queuine tRNA-ribosyltransferase family. In terms of assembly, homodimer. Within each dimer, one monomer is responsible for RNA recognition and catalysis, while the other monomer binds to the replacement base PreQ1. Zn(2+) serves as cofactor.

The enzyme catalyses 7-aminomethyl-7-carbaguanine + guanosine(34) in tRNA = 7-aminomethyl-7-carbaguanosine(34) in tRNA + guanine. It participates in tRNA modification; tRNA-queuosine biosynthesis. In terms of biological role, catalyzes the base-exchange of a guanine (G) residue with the queuine precursor 7-aminomethyl-7-deazaguanine (PreQ1) at position 34 (anticodon wobble position) in tRNAs with GU(N) anticodons (tRNA-Asp, -Asn, -His and -Tyr). Catalysis occurs through a double-displacement mechanism. The nucleophile active site attacks the C1' of nucleotide 34 to detach the guanine base from the RNA, forming a covalent enzyme-RNA intermediate. The proton acceptor active site deprotonates the incoming PreQ1, allowing a nucleophilic attack on the C1' of the ribose to form the product. After dissociation, two additional enzymatic reactions on the tRNA convert PreQ1 to queuine (Q), resulting in the hypermodified nucleoside queuosine (7-(((4,5-cis-dihydroxy-2-cyclopenten-1-yl)amino)methyl)-7-deazaguanosine). In Lawsonia intracellularis (strain PHE/MN1-00), this protein is Queuine tRNA-ribosyltransferase.